Here is a 257-residue protein sequence, read N- to C-terminus: 5-keto-4-deoxy-D-glucarate aldolase (257 aa).

Catalysis depends on His-51, which acts as the Proton acceptor. Residue Gln-152 participates in substrate binding. Glu-154 is a Mg(2+) binding site. Substrate-binding residues include Ser-179 and Asp-180. Asp-180 lines the Mg(2+) pocket.

It belongs to the HpcH/HpaI aldolase family. KDGluc aldolase subfamily. In terms of assembly, homohexamer; trimer of dimers. Requires Mg(2+) as cofactor.

It carries out the reaction 5-dehydro-4-deoxy-D-glucarate = 2-hydroxy-3-oxopropanoate + pyruvate. It catalyses the reaction 2-dehydro-3-deoxy-D-glucarate = 2-hydroxy-3-oxopropanoate + pyruvate. Its pathway is carbohydrate acid metabolism; galactarate degradation; D-glycerate from galactarate: step 2/3. Functionally, catalyzes the reversible retro-aldol cleavage of both 5-keto-4-deoxy-D-glucarate and 2-keto-3-deoxy-D-glucarate to pyruvate and tartronic semialdehyde. In Shigella boydii serotype 18 (strain CDC 3083-94 / BS512), this protein is 5-keto-4-deoxy-D-glucarate aldolase.